A 368-amino-acid chain; its full sequence is MSNAPILLTPGPLTTSIRTRQAMLVDWGSWDRDFNQLTASVCEQLLAIIDGASSHHCVPLQGSGTFAVEAAIGTLVPRDGKVLVLINGAYGQRLAKICKVLGRTYSTFETAEDQPTTAADVDRLLAEDPAITHVALIHCETSTGILNPLPEIAQVIKRHGKRLIIDAMSSFGALPIDAREIPFEALIAASGKCLEGVPGMGFVFAEKSALAAAEGNAHSLAMDLHDQHAYMAKTGQWRFTPPTHVVAALHEALQQYNEEGGLPARHQRYADNCKTLLDGMAAIGLRSFLPAEIQAPIIVTFHAPTDARYQFKDFYERVKAKGFILYPGKLTQVETFRVGCIGVVGADGMQAAVNAVAEVLREMEVLDI.

Lys-192 bears the N6-(pyridoxal phosphate)lysine mark.

Belongs to the class-V pyridoxal-phosphate-dependent aminotransferase family. PhnW subfamily. Homodimer. It depends on pyridoxal 5'-phosphate as a cofactor.

The catalysed reaction is (2-aminoethyl)phosphonate + pyruvate = phosphonoacetaldehyde + L-alanine. Functionally, involved in phosphonate degradation. The protein is 2-aminoethylphosphonate--pyruvate transaminase of Pseudomonas putida (strain ATCC 47054 / DSM 6125 / CFBP 8728 / NCIMB 11950 / KT2440).